A 72-amino-acid polypeptide reads, in one-letter code: Translation initiation factor IF-1 (72 aa).

The 72-residue stretch at 1-72 folds into the S1-like domain; it reads MAKEEAIEVE…TRGRITYREK (72 aa).

It belongs to the IF-1 family. As to quaternary structure, component of the 30S ribosomal translation pre-initiation complex which assembles on the 30S ribosome in the order IF-2 and IF-3, IF-1 and N-formylmethionyl-tRNA(fMet); mRNA recruitment can occur at any time during PIC assembly.

Its subcellular location is the cytoplasm. One of the essential components for the initiation of protein synthesis. Stabilizes the binding of IF-2 and IF-3 on the 30S subunit to which N-formylmethionyl-tRNA(fMet) subsequently binds. Helps modulate mRNA selection, yielding the 30S pre-initiation complex (PIC). Upon addition of the 50S ribosomal subunit IF-1, IF-2 and IF-3 are released leaving the mature 70S translation initiation complex. In Syntrophotalea carbinolica (strain DSM 2380 / NBRC 103641 / GraBd1) (Pelobacter carbinolicus), this protein is Translation initiation factor IF-1.